The following is a 545-amino-acid chain: Chaperonin GroEL (545 aa).

ATP-binding positions include 29–32 (TMGP), Lys50, 86–90 (DGTTT), Gly414, 480–482 (NAA), and Asp496.

It belongs to the chaperonin (HSP60) family. As to quaternary structure, forms a cylinder of 14 subunits composed of two heptameric rings stacked back-to-back. Interacts with the co-chaperonin GroES.

It localises to the cytoplasm. It catalyses the reaction ATP + H2O + a folded polypeptide = ADP + phosphate + an unfolded polypeptide.. Functionally, together with its co-chaperonin GroES, plays an essential role in assisting protein folding. The GroEL-GroES system forms a nano-cage that allows encapsulation of the non-native substrate proteins and provides a physical environment optimized to promote and accelerate protein folding. This chain is Chaperonin GroEL, found in Malacoplasma penetrans (strain HF-2) (Mycoplasma penetrans).